The primary structure comprises 482 residues: MVMEKPSPLLVGREFVRQYYTLLNKAPEYLHRFYGRNSSYVHGGVDASGKPQEAVYGQNDIHHKVLSLNFSECHTKIRHVDAHATLSDGVVVQVMGLLSNSGQPERKFMQTFVLAPEGSVPNKFYVHNDMFRYEDEVFGDSEPELDEESEDEVEEEQEDRQPSPEPVQENANSAYYDAHPVTNGIEEPLEESSHEPEPEPESETKTEELKPQVEEKHLEELEEKSATPPPAEPASLPQEPPKAFSWASVTSKNLPPSGTVSSSGIPPHVKAPVSQPRVDAKPEVQSQPPRVREQRPRERPGFPPRGPRPGRGDMEQNDSDNRRIIRYPDSHQLFVGNLPHDIDENELKEFFMSFGNVVELRINTKGVGGKLPNFGFVVFDDSEPVQRILIAKPIMFRGEVRLNVEEKKTRAARERETRGGGDDRRDIRRNDRGPGGPRGIVGGGMMRDRDGRGPPPRGGMTQKLGSGRGTGQMEGRFTGQRR.

Residues 11–133 (VGREFVRQYY…FYVHNDMFRY (123 aa)) enclose the NTF2 domain. The span at 140-158 (DSEPELDEESEDEVEEEQE) shows a compositional bias: acidic residues. Disordered regions lie at residues 140–170 (DSEPELDEESEDEVEEEQEDRQPSPEPVQEN) and 187–318 (EPLE…EQND). 3 positions are modified to phosphoserine: S141, S149, and S225. The segment at 142–220 (EPELDEESED…PQVEEKHLEE (79 aa)) is acidic disordered region. The span at 191–225 (ESSHEPEPEPESETKTEELKPQVEEKHLEELEEKS) shows a compositional bias: basic and acidic residues. T227 is subject to Phosphothreonine. The span at 247 to 264 (ASVTSKNLPPSGTVSSSG) shows a compositional bias: polar residues. K281 is covalently cross-linked (Glycyl lysine isopeptide (Lys-Gly) (interchain with G-Cter in SUMO2)). Residues 290-300 (RVREQRPRERP) are compositionally biased toward basic and acidic residues. In terms of domain architecture, RRM spans 331-409 (HQLFVGNLPH…VRLNVEEKKT (79 aa)). N6-succinyllysine is present on K392. The RG-rich region stretch occupies residues 404 to 476 (VEEKKTRAAR…GRGTGQMEGR (73 aa)). Residues 408–432 (KTRAARERETRGGGDDRRDIRRNDR) show a composition bias toward basic and acidic residues. The tract at residues 408–482 (KTRAARERET…MEGRFTGQRR (75 aa)) is disordered. Residues 433 to 445 (GPGGPRGIVGGGM) show a composition bias toward gly residues. R457 carries the post-translational modification Omega-N-methylarginine. Residue S466 is modified to Phosphoserine. R468 is modified (omega-N-methylarginine).

In terms of assembly, forms homooligomers. Forms heterodimers with G3BP1. Interacts with NFKBIA (via N-terminus). Interacts (via NTF2 domain) with USP10; inhibiting stress granule formation. Interacts (via NTF2 domain) with CAPRIN1; promoting stress granule formation. Associates (via RG-rich region) with 40S ribosome subunits. Interacts with PABPC1.

It is found in the cytoplasm. Its subcellular location is the stress granule. With respect to regulation, under physiological conditions, G3BP2 adopts a compact state that is stabilized by intramolecular interactions between the RG-rich and the acidic regions that inhibit phase separation. Upon stress, polysomes disassemble and mRNAs are released in an unfolded protein-free state. Binding of unfolded mRNA to G3BP2 outcompetes the intramolecular interactions and RNA-bound G3BP2 adopts an expanded conformation in which the RG-rich region becomes exposed to engage in protein-protein and protein-RNA interactions, allowing physical cross-linking of RNA molecules to form protein-RNA condensates, leading to liquid-liquid phase separation (LLPS). Functionally, scaffold protein that plays an essential role in cytoplasmic stress granule formation which acts as a platform for antiviral signaling. Plays an essential role in stress granule formation. Stress granules are membraneless compartments that store mRNAs and proteins, such as stalled translation pre-initiation complexes, in response to stress. Promotes formation of stress granules phase-separated membraneless compartment by undergoing liquid-liquid phase separation (LLPS) upon unfolded RNA-binding: functions as a molecular switch that triggers RNA-dependent LLPS in response to a rise in intracellular free RNA concentrations. The polypeptide is Ras GTPase-activating protein-binding protein 2 (G3bp2) (Mus musculus (Mouse)).